The sequence spans 347 residues: uncharacterized protein (347 aa).

Transmembrane regions (helical) follow at residues 6–26 (GSASQLAFVYVGTVVGAGFAT), 37–57 (FGWFGFFGILVSGGMFTLLGA), 90–110 (FMLFVLLGVTSVMLSGAGALF), 114–134 (LGMSAQIGMLITIGLSLIVMT), 140–160 (IFGVNVFVVPLLIIFSMIVVA), 182–202 (WLLSAVSYGALNLSLAQAVLV), 217–237 (GALIGGTMLTIVLSASFLSLS), 262–282 (LIYLLIIFGEVFTSVIGNLYG), 289–309 (SFLPVKSKYIFAAIMITAYIT), and 317–337 (LISTIYPLFGYVSLAFIGALL).

It is found in the cell membrane. This is an uncharacterized protein from Bacillus subtilis (strain 168).